The primary structure comprises 181 residues: Large ribosomal subunit protein uL10 (181 aa).

This sequence belongs to the universal ribosomal protein uL10 family. Part of the ribosomal stalk of the 50S ribosomal subunit. The N-terminus interacts with L11 and the large rRNA to form the base of the stalk. The C-terminus forms an elongated spine to which L12 dimers bind in a sequential fashion forming a multimeric L10(L12)X complex.

Functionally, forms part of the ribosomal stalk, playing a central role in the interaction of the ribosome with GTP-bound translation factors. This chain is Large ribosomal subunit protein uL10, found in Protochlamydia amoebophila (strain UWE25).